The chain runs to 152 residues: Snaclec coagulation factor IX/factor X-binding protein subunit A (152 aa).

The N-terminal stretch at 1–23 (MGRFIFVSFGLLVVAASLSGTGA) is a signal peptide. Cystine bridges form between C25–C36, C53–C150, and C125–C142. One can recognise a C-type lectin domain in the interval 32-151 (YEGHCYKAFE…CGQRIPFVCE (120 aa)). 3 residues coordinate Ca(2+): S64, E66, and E70. Position 151 (E151) interacts with Ca(2+).

Belongs to the snaclec family. In terms of assembly, heterodimer of subunits A and B; disulfide-linked. Expressed by the venom gland.

Its subcellular location is the secreted. Its function is as follows. Anticoagulant protein which binds to the gamma-carboxyglutamic acid-domain regions of factors IX (F9) and factor X (F10) in the presence of calcium with a 1 to 1 stoichiometry. In Trimeresurus stejnegeri (Chinese green tree viper), this protein is Snaclec coagulation factor IX/factor X-binding protein subunit A.